A 469-amino-acid polypeptide reads, in one-letter code: MSNITKLFVKSTKNFSRSFSRKTVDPSYLKISPETKITTLSNGIRVATEQTYGEVASVGVWVDSGSVYETDKNNGVAHFLEHMIFKGTAKRPTPQSIETEIENMGGSLNAFTSREHSAYYMKVLKDNVPNAVDILSDILQNSKFETSLIEQERDTILSENDYIQSKEDEVVFDQLHAAAFQGSALGRTILGPVENIKSITREQIQEFINENYTGDRLVISAAGAVNHEQLVEQVKEKFANVKMSQVSKDVKRAAITNDFIGSELRVRDDEQPLIHFAVAVRALPWTDPDYFVLELIQTMIGNWNRGIAAGKNIASNLGEIVATEDLAESYSTFFTCYQDTGLFGNYGVCQPERVDDLVAEMLKEWQRIATSCNKNEVERNKQKLLATTLMQYDGTSKVCEGIGRQILTLGRRLSPFEVYTRINEITVADVQRVASTLLRDVSPAVTAIGPIANYPDYNFVKGWTYWNRL.

Zn(2+) is bound at residue His78. Catalysis depends on Glu81, which acts as the Proton acceptor. Positions 82 and 159 each coordinate Zn(2+).

The protein belongs to the peptidase M16 family. Heterodimer of alpha and beta subunits, forming the mitochondrial processing protease (MPP) in which subunit alpha is involved in substrate recognition and binding and subunit beta is the catalytic subunit. mppB is probably also part of the cytochrome bc1 complex as a core I protein in the mitochondrial inner membrane. Zn(2+) is required as a cofactor.

Its subcellular location is the mitochondrion inner membrane. It localises to the mitochondrion matrix. It catalyses the reaction Release of N-terminal transit peptides from precursor proteins imported into the mitochondrion, typically with Arg in position P2.. Binding to alpha subunit is required for catalytic activity. Catalytic subunit of the essential mitochondrial processing protease (MPP), which cleaves the mitochondrial sequence off newly imported precursors proteins. Preferentially, cleaves after an arginine at position P2. Plays an essential role in mitochondrial biogenesis. The sequence is that of Mitochondrial-processing peptidase subunit beta (mppB) from Dictyostelium discoideum (Social amoeba).